The following is a 202-amino-acid chain: Peptidyl-tRNA hydrolase (202 aa).

Position 14 (tyrosine 14) interacts with tRNA. The active-site Proton acceptor is histidine 19. TRNA contacts are provided by phenylalanine 64, asparagine 66, and asparagine 112.

The protein belongs to the PTH family. In terms of assembly, monomer.

It is found in the cytoplasm. It carries out the reaction an N-acyl-L-alpha-aminoacyl-tRNA + H2O = an N-acyl-L-amino acid + a tRNA + H(+). Its function is as follows. Hydrolyzes ribosome-free peptidyl-tRNAs (with 1 or more amino acids incorporated), which drop off the ribosome during protein synthesis, or as a result of ribosome stalling. Catalyzes the release of premature peptidyl moieties from peptidyl-tRNA molecules trapped in stalled 50S ribosomal subunits, and thus maintains levels of free tRNAs and 50S ribosomes. The chain is Peptidyl-tRNA hydrolase from Methylobacterium radiotolerans (strain ATCC 27329 / DSM 1819 / JCM 2831 / NBRC 15690 / NCIMB 10815 / 0-1).